A 278-amino-acid chain; its full sequence is Octanoyl-[GcvH]:protein N-octanoyltransferase (278 aa).

Positions 44–249 (SQSPPTLRAW…TLQQHGASLL (206 aa)) constitute a BPL/LPL catalytic domain. The Acyl-thioester intermediate role is filled by Cys148.

Belongs to the octanoyltransferase LipL family.

The catalysed reaction is N(6)-octanoyl-L-lysyl-[glycine-cleavage complex H protein] + L-lysyl-[lipoyl-carrier protein] = N(6)-octanoyl-L-lysyl-[lipoyl-carrier protein] + L-lysyl-[glycine-cleavage complex H protein]. The protein operates within protein modification; protein lipoylation via endogenous pathway; protein N(6)-(lipoyl)lysine from octanoyl-[acyl-carrier-protein]. Catalyzes the amidotransfer (transamidation) of the octanoyl moiety from octanoyl-GcvH to the lipoyl domain of the E2 subunit of lipoate-dependent enzymes. The chain is Octanoyl-[GcvH]:protein N-octanoyltransferase from Halalkalibacterium halodurans (strain ATCC BAA-125 / DSM 18197 / FERM 7344 / JCM 9153 / C-125) (Bacillus halodurans).